A 312-amino-acid chain; its full sequence is Acetyl-coenzyme A carboxylase carboxyl transferase subunit alpha (312 aa).

One can recognise a CoA carboxyltransferase C-terminal domain in the interval 36–286 (RLDKEVKSIY…KEYFLDALRT (251 aa)).

Belongs to the AccA family. In terms of assembly, acetyl-CoA carboxylase is a heterohexamer composed of biotin carboxyl carrier protein (AccB), biotin carboxylase (AccC) and two subunits each of ACCase subunit alpha (AccA) and ACCase subunit beta (AccD).

The protein resides in the cytoplasm. The catalysed reaction is N(6)-carboxybiotinyl-L-lysyl-[protein] + acetyl-CoA = N(6)-biotinyl-L-lysyl-[protein] + malonyl-CoA. Its pathway is lipid metabolism; malonyl-CoA biosynthesis; malonyl-CoA from acetyl-CoA: step 1/1. Functionally, component of the acetyl coenzyme A carboxylase (ACC) complex. First, biotin carboxylase catalyzes the carboxylation of biotin on its carrier protein (BCCP) and then the CO(2) group is transferred by the carboxyltransferase to acetyl-CoA to form malonyl-CoA. The protein is Acetyl-coenzyme A carboxylase carboxyl transferase subunit alpha of Helicobacter pylori (strain J99 / ATCC 700824) (Campylobacter pylori J99).